Here is a 137-residue protein sequence, read N- to C-terminus: Small ribosomal subunit protein uS8 (137 aa).

It belongs to the universal ribosomal protein uS8 family. As to quaternary structure, part of the 30S ribosomal subunit. Contacts proteins S5 and S12.

In terms of biological role, one of the primary rRNA binding proteins, it binds directly to 16S rRNA central domain where it helps coordinate assembly of the platform of the 30S subunit. The polypeptide is Small ribosomal subunit protein uS8 (Metamycoplasma arthritidis (strain 158L3-1) (Mycoplasma arthritidis)).